The sequence spans 524 residues: Probable malate:quinone oxidoreductase (524 aa).

Belongs to the MQO family. The cofactor is FAD.

It catalyses the reaction (S)-malate + a quinone = a quinol + oxaloacetate. Its pathway is carbohydrate metabolism; tricarboxylic acid cycle; oxaloacetate from (S)-malate (quinone route): step 1/1. This chain is Probable malate:quinone oxidoreductase, found in Blochmanniella floridana.